We begin with the raw amino-acid sequence, 629 residues long: tRNA uridine 5-carboxymethylaminomethyl modification enzyme MnmG (629 aa).

Residues 14 to 19, valine 126, and serine 181 each bind FAD; that span reads GAGHAG. NAD(+) is bound at residue 273-287; it reads GPRYCPSIEDKVVRF. FAD is bound at residue glutamine 370.

It belongs to the MnmG family. As to quaternary structure, homodimer. Heterotetramer of two MnmE and two MnmG subunits. FAD is required as a cofactor.

It localises to the cytoplasm. In terms of biological role, NAD-binding protein involved in the addition of a carboxymethylaminomethyl (cmnm) group at the wobble position (U34) of certain tRNAs, forming tRNA-cmnm(5)s(2)U34. The protein is tRNA uridine 5-carboxymethylaminomethyl modification enzyme MnmG of Geobacillus kaustophilus (strain HTA426).